The sequence spans 693 residues: Testis-specific Y-encoded-like protein 2 (693 aa).

Disordered regions lie at residues 1–56 (MDRP…EAAQ) and 104–125 (GYGEAPPPTESLEALPTPEASG). Lys11 participates in a covalent cross-link: Glycyl lysine isopeptide (Lys-Gly) (interchain with G-Cter in SUMO2). Phosphoserine is present on residues Ser18 and Ser20. Residues 23–44 (RDPPPPPPPPPLLRLPLPPPQQ) show a composition bias toward pro residues. Residues Lys163 and Lys165 each participate in a glycyl lysine isopeptide (Lys-Gly) (interchain with G-Cter in SUMO2) cross-link. Residues 175 to 207 (EDEDERESMRSSRRRRRRRRRKQRKVKRESRER) are disordered. Positions 185-202 (SSRRRRRRRRRKQRKVKR) are enriched in basic residues. Position 340 is a phosphothreonine (Thr340). 2 disordered regions span residues 474 to 605 (ENIC…DIEY) and 627 to 693 (ISDE…GKTG). The segment covering 487–496 (VPNNETTDNN) has biased composition (polar residues). Residues 509 to 519 (ESADDNNENPE) show a composition bias toward acidic residues. Over residues 531–542 (NPNNNENTYGNN) the composition is skewed to low complexity. Acidic residues-rich tracts occupy residues 559–602 (SDSD…DDRD) and 627–675 (ISDE…DLED). Phosphoserine occurs at positions 658, 668, and 671.

Belongs to the nucleosome assembly protein (NAP) family. As to quaternary structure, interacts with histones. Interacts with CASK. Part of a complex containing CASK, TBR1 and TSPYL2. In terms of processing, phosphorylation at Ser-20 and/or Thr-340 impairs function on cell proliferation. Ubiquitously expressed, with highest levels in brain, testis and heart, and lowest levels in liver and pancreas.

The protein localises to the nucleus. The protein resides in the cytoplasm. Part of the CASK/TBR1/TSPYL2 transcriptional complex which modulates gene expression in response to neuronal synaptic activity, probably by facilitating nucleosome assembly. May inhibit cell proliferation by inducing p53-dependent CDKN1A expression. The polypeptide is Testis-specific Y-encoded-like protein 2 (TSPYL2) (Homo sapiens (Human)).